The chain runs to 81 residues: Putative defensin-like protein 26 (81 aa).

The first 21 residues, 1 to 21, serve as a signal peptide directing secretion; the sequence is MASLKVFSFALLIVLTFSVIG. Cystine bridges form between cysteine 33-cysteine 81 and cysteine 52-cysteine 77.

The protein belongs to the DEFL family.

It localises to the secreted. The chain is Putative defensin-like protein 26 from Arabidopsis thaliana (Mouse-ear cress).